Consider the following 619-residue polypeptide: tRNA uridine 5-carboxymethylaminomethyl modification enzyme MnmG (619 aa).

FAD contacts are provided by residues 14 to 19, Val126, and Ser181; that span reads GAGHAG. Residue 273 to 287 coordinates NAD(+); that stretch reads GPRYCPSIEDKIMRF. An FAD-binding site is contributed by Gln370.

Belongs to the MnmG family. Homodimer. Heterotetramer of two MnmE and two MnmG subunits. The cofactor is FAD.

It localises to the cytoplasm. Functionally, NAD-binding protein involved in the addition of a carboxymethylaminomethyl (cmnm) group at the wobble position (U34) of certain tRNAs, forming tRNA-cmnm(5)s(2)U34. The protein is tRNA uridine 5-carboxymethylaminomethyl modification enzyme MnmG of Syntrophotalea carbinolica (strain DSM 2380 / NBRC 103641 / GraBd1) (Pelobacter carbinolicus).